The following is a 480-amino-acid chain: 11S globulin subunit beta (480 aa).

The first 21 residues, 1–21 (MARSSLFTFLCLAVFINGCLS), serve as a signal peptide directing secretion. Q22 bears the Pyrrolidone carboxylic acid mark. 2 disulfide bridges follow: C48–C81 and C124–C303. Cupin type-1 domains are found at residues 51-251 (ENLR…GLVR) and 309-458 (QNIG…EEAQ). Positions 408 and 468 each coordinate Mg(2+).

The protein belongs to the 11S seed storage protein (globulins) family. Hexamer; each subunit is composed of an acidic and a basic chain derived from a single precursor and linked by a disulfide bond.

Functionally, this is a seed storage protein. The sequence is that of 11S globulin subunit beta from Cucurbita maxima (Pumpkin).